Consider the following 221-residue polypeptide: Antigenic protein SchS34 (221 aa).

4 N-linked (GlcNAc...) asparagine glycosylation sites follow: N27, N69, N141, and N215.

In terms of tissue distribution, expressed in the mycelium (at protein level).

The protein resides in the secreted. Its subcellular location is the spore. It localises to the spore wall. The protein localises to the cytoplasm. The polypeptide is Antigenic protein SchS34 (Stachybotrys chartarum (Toxic black mold)).